Consider the following 163-residue polypeptide: NADH-quinone oxidoreductase subunit I (163 aa).

2 consecutive 4Fe-4S ferredoxin-type domains span residues 54 to 84 (LRRY…IESD) and 94 to 123 (TRYD…ETHI). [4Fe-4S] cluster-binding residues include Cys64, Cys67, Cys70, Cys74, Cys103, Cys106, Cys109, and Cys113.

Belongs to the complex I 23 kDa subunit family. NDH-1 is composed of 14 different subunits. Subunits NuoA, H, J, K, L, M, N constitute the membrane sector of the complex. Requires [4Fe-4S] cluster as cofactor.

Its subcellular location is the cell inner membrane. The catalysed reaction is a quinone + NADH + 5 H(+)(in) = a quinol + NAD(+) + 4 H(+)(out). Functionally, NDH-1 shuttles electrons from NADH, via FMN and iron-sulfur (Fe-S) centers, to quinones in the respiratory chain. The immediate electron acceptor for the enzyme in this species is believed to be ubiquinone. Couples the redox reaction to proton translocation (for every two electrons transferred, four hydrogen ions are translocated across the cytoplasmic membrane), and thus conserves the redox energy in a proton gradient. This chain is NADH-quinone oxidoreductase subunit I, found in Cupriavidus metallidurans (strain ATCC 43123 / DSM 2839 / NBRC 102507 / CH34) (Ralstonia metallidurans).